The chain runs to 410 residues: LL-diaminopimelate aminotransferase (410 aa).

Residues Tyr15 and Gly42 each contribute to the substrate site. Residues Tyr72, 108–109 (SK), Tyr132, Asn187, Tyr218, and 246–248 (SFS) each bind pyridoxal 5'-phosphate. Residues Lys109, Tyr132, and Asn187 each coordinate substrate. Lys249 bears the N6-(pyridoxal phosphate)lysine mark. Arg257 and Asn292 together coordinate pyridoxal 5'-phosphate. Substrate is bound by residues Asn292 and Arg388.

Belongs to the class-I pyridoxal-phosphate-dependent aminotransferase family. LL-diaminopimelate aminotransferase subfamily. Homodimer. Pyridoxal 5'-phosphate is required as a cofactor.

The enzyme catalyses (2S,6S)-2,6-diaminopimelate + 2-oxoglutarate = (S)-2,3,4,5-tetrahydrodipicolinate + L-glutamate + H2O + H(+). It participates in amino-acid biosynthesis; L-lysine biosynthesis via DAP pathway; LL-2,6-diaminopimelate from (S)-tetrahydrodipicolinate (aminotransferase route): step 1/1. Its function is as follows. Involved in the synthesis of meso-diaminopimelate (m-DAP or DL-DAP), required for both lysine and peptidoglycan biosynthesis. Catalyzes the direct conversion of tetrahydrodipicolinate to LL-diaminopimelate. The chain is LL-diaminopimelate aminotransferase from Thermosynechococcus vestitus (strain NIES-2133 / IAM M-273 / BP-1).